Reading from the N-terminus, the 70-residue chain is Large ribosomal subunit protein uL29 (70 aa).

The protein belongs to the universal ribosomal protein uL29 family.

In Prochlorococcus marinus (strain MIT 9303), this protein is Large ribosomal subunit protein uL29.